We begin with the raw amino-acid sequence, 261 residues long: Transmembrane protein 187 (261 aa).

The next 6 membrane-spanning stretches (helical) occupy residues 8-28 (AFVH…TGIF), 43-63 (APVA…VNMA), 88-108 (VFAA…WTQW), 113-133 (VLDQ…CLYL), 140-162 (WLFL…HPQG), and 190-210 (SATY…LKLC).

As to expression, ubiquitous.

Its subcellular location is the membrane. In Homo sapiens (Human), this protein is Transmembrane protein 187 (TMEM187).